The following is a 436-amino-acid chain: 3-ketoacyl-CoA thiolase (436 aa).

Catalysis depends on cysteine 99, which acts as the Acyl-thioester intermediate. Active-site proton acceptor residues include histidine 392 and cysteine 422.

This sequence belongs to the thiolase-like superfamily. Thiolase family. In terms of assembly, heterotetramer of two alpha chains (FadJ) and two beta chains (FadI).

It localises to the cytoplasm. It catalyses the reaction an acyl-CoA + acetyl-CoA = a 3-oxoacyl-CoA + CoA. It participates in lipid metabolism; fatty acid beta-oxidation. In terms of biological role, catalyzes the final step of fatty acid oxidation in which acetyl-CoA is released and the CoA ester of a fatty acid two carbons shorter is formed. The protein is 3-ketoacyl-CoA thiolase of Salmonella typhi.